Consider the following 129-residue polypeptide: Small ribosomal subunit protein uS8c (129 aa).

Belongs to the universal ribosomal protein uS8 family. In terms of assembly, part of the 30S ribosomal subunit.

It is found in the plastid. It localises to the chloroplast. One of the primary rRNA binding proteins, it binds directly to 16S rRNA central domain where it helps coordinate assembly of the platform of the 30S subunit. This Oltmannsiellopsis viridis (Marine flagellate) protein is Small ribosomal subunit protein uS8c (rps8).